A 596-amino-acid chain; its full sequence is uncharacterized protein (596 aa).

The N-terminal stretch at Met1–Ala20 is a signal peptide. Composition is skewed to basic and acidic residues over residues Ala25–Thr90 and Val161–Thr184. Residues Ala25–Thr184 are disordered. Coiled coils occupy residues Arg177–Ser281 and Asn318–Asp454.

It belongs to the peptidase M23B family.

This is an uncharacterized protein from Neisseria meningitidis serogroup B (strain ATCC BAA-335 / MC58).